The following is a 642-amino-acid chain: Uromodulin (642 aa).

The N-terminal stretch at 1-24 is a signal peptide; sequence MGIPLTWMLLVMMVTSWFTLAEAS. Residues N25 and N38 are each glycosylated (N-linked (GlcNAc...) asparagine). One can recognise an EGF-like 1 domain in the interval 28–64; that stretch reads EARRCSECHNNATCTVDGVVTTCSCQTGFTGDGLVCE. Disulfide bonds link C32–C41, C35–C50, C52–C63, C69–C82, C77–C91, C93–C105, C111–C125, C119–C134, C136–C147, C149–C160, C154–C171, C175–C268, C196–C283, C218–C256, C224–C288, C249–C257, C298–C307, C301–C316, C318–C348, C336–C426, and C367–C390. The region spanning 65–106 is the EGF-like 2; calcium-binding domain; that stretch reads DMDECATPWTHNCSNSSCVNTPGSFKCSCQDGFRLTPELSCT. N76 and N79 each carry an N-linked (GlcNAc...) asparagine glycan. Positions 107-148 constitute an EGF-like 3; calcium-binding domain; the sequence is DVDECSEQGLSNCHALATCVNTEGDYLCVCPEGFTGDGWYCE. The beta hairpin stretch occupies residues 149–172; it reads CSPGSCEPGLDCLPQGPDGKLVCQ. The segment at 173-292 is D10C; that stretch reads DPCNTYETLT…CNLAYCTDPS (120 aa). N233 carries an N-linked (GlcNAc...) asparagine glycan. N276 carries an N-linked (GlcNAc...) asparagine glycan. The EGF-like 4 domain occupies 293 to 324; it reads SVEGTCEECRVDEDCISDNGRWRCQCKQDSNI. N323 is a glycosylation site (N-linked (GlcNAc...) asparagine). Residues 335–430 are ZP-N; that stretch reads ECGANDIKMS…RMNFECSYPL (96 aa). Positions 335-590 constitute a ZP domain; the sequence is ECGANDIKMS…PTCSGTRFRS (256 aa). N397 and N448 each carry an N-linked (GlcNAc...) asparagine glycan. The segment at 431–454 is flexible ZP-N/ZP-C linker; important for secretion and polymerization into filaments; it reads DMKVSLKTSLQPMVSALNISLGGT. The tract at residues 455–465 is internal hydrophobic patch (IHP); it reads GKFTVRMALFQ. Residues 455 to 590 form a ZP-C region; the sequence is GKFTVRMALF…PTCSGTRFRS (136 aa). Intrachain disulfides connect C507–C567, C528–C583, and C572–C579. Residue N514 is glycosylated (N-linked (GlcNAc...) asparagine). The segment at 587–590 is essential for cleavage by HPN; it reads RFRS. An external hydrophobic patch (EHP); regulates polymerization into filaments region spans residues 599-607; it reads VLNLGPITR. A lipid anchor (GPI-anchor amidated alanine) is attached at A618. Positions 619–642 are cleaved as a propeptide — removed in mature form; the sequence is SSNLRLLSIWLLLFPSATLIFMVQ.

Homodimer that then polymerizes into long filaments. The filaments can additionally assemble laterally to form a sheet. The filaments consist of a zigzag-shaped backbone with laterally protruding arms which interact with bacterial adhesin fimH. Two fimH molecules can bind to a single UMOD monomer. N-glycosylated. Post-translationally, proteolytically cleaved at a conserved C-terminal proteolytic cleavage site to generate the secreted form found in urine. This cleavage is catalyzed by HPN. Detected in urine (secreted form). Detected in kidney thick ascending limb epithelial cells (at protein level).

It localises to the secreted. The protein localises to the apical cell membrane. The protein resides in the basolateral cell membrane. It is found in the cell projection. Its subcellular location is the cilium membrane. Its function is as follows. Functions in biogenesis and organization of the apical membrane of epithelial cells of the thick ascending limb of Henle's loop (TALH), where it promotes formation of complex filamentous gel-like structure that may play a role in the water barrier permeability. May serve as a receptor for binding and endocytosis of cytokines (IL-1, IL-2) and TNF. Facilitates neutrophil migration across renal epithelia. In terms of biological role, in the urine, may contribute to colloid osmotic pressure, retards passage of positively charged electrolytes and inhibits formation of liquid containing supersaturated salts and subsequent formation of salt crystals. Protects against urinary tract infections by binding to type 1 fimbriated E.coli. Binds to the bacterial adhesin fimH which mediates the stable formation of bacterial aggregates, prevents the binding of E.coli to uroplakins UPK1A and UPK1B which act as urothelial receptors for type I fimbriae, and allows for pathogen clearance through micturation. Also promotes aggregation of other bacteria including K.pneumoniae, P.aeruginosa and S.mitis and so may also protect against other uropathogens. The protein is Uromodulin (Umod) of Mus musculus (Mouse).